Here is a 331-residue protein sequence, read N- to C-terminus: Glucan endo-1,3-beta-glucosidase, acidic isoform GL161 (331 aa).

Residues methionine 1 to alanine 9 form the signal peptide. Glutamine 10 bears the Pyrrolidone carboxylic acid mark. 2 N-linked (GlcNAc...) asparagine glycosylation sites follow: asparagine 55 and asparagine 75. The active-site Nucleophile is the glutamate 244.

This sequence belongs to the glycosyl hydrolase 17 family. Is expressed primarily in epidermal cell of healthy plant, and following induction by ethylene, accumulates in mesophyll cells.

The protein localises to the secreted. It localises to the extracellular space. It catalyses the reaction Hydrolysis of (1-&gt;3)-beta-D-glucosidic linkages in (1-&gt;3)-beta-D-glucans.. Is thought to be an important plant defense-related product against fungal pathogens. The polypeptide is Glucan endo-1,3-beta-glucosidase, acidic isoform GL161 (Nicotiana tabacum (Common tobacco)).